The primary structure comprises 266 residues: Phosphatidate cytidylyltransferase (266 aa).

8 helical membrane-spanning segments follow: residues 16–36, 52–72, 78–98, 101–121, 125–145, 164–184, 186–206, and 237–257; these read FVLI…LFWA, LFQV…WVAA, PIEC…YQKA, SEAI…FGVY, GAVA…GAFF, LEGA…VGMG, LSGG…VAVF, and LDSM…LEIW.

It belongs to the CDS family.

Its subcellular location is the cell inner membrane. It carries out the reaction a 1,2-diacyl-sn-glycero-3-phosphate + CTP + H(+) = a CDP-1,2-diacyl-sn-glycerol + diphosphate. It participates in phospholipid metabolism; CDP-diacylglycerol biosynthesis; CDP-diacylglycerol from sn-glycerol 3-phosphate: step 3/3. The sequence is that of Phosphatidate cytidylyltransferase (cdsA) from Helicobacter pylori (strain ATCC 700392 / 26695) (Campylobacter pylori).